Here is a 104-residue protein sequence, read N- to C-terminus: Pterin-4-alpha-carbinolamine dehydratase (104 aa).

Residue A2 is modified to N-acetylalanine. Substrate is bound by residues 61–63 and 78–81; these read DHH and STHE.

It belongs to the pterin-4-alpha-carbinolamine dehydratase family. As to quaternary structure, homotetramer and homodimer. Heterotetramer with HNF1A; formed by a dimer of dimers. Interacts with HNF1B (via HNF-p1 domain); the interaction increases HNF1B transactivation activity. In terms of tissue distribution, mainly expressed in the liver, in pancreatic cells, and in the kidney, especially in the distal convoluted tubule, in the cortical thick ascending limb of Henle's loop and in the connecting tubule.

It localises to the cytoplasm. The protein resides in the nucleus. The enzyme catalyses (4aS,6R)-4a-hydroxy-L-erythro-5,6,7,8-tetrahydrobiopterin = (6R)-L-erythro-6,7-dihydrobiopterin + H2O. In terms of biological role, involved in tetrahydrobiopterin biosynthesis. Seems to both prevent the formation of 7-pterins and accelerate the formation of quinonoid-BH2. Coactivator for HNF1A-dependent transcription. Regulates the dimerization of homeodomain protein HNF1A and enhances its transcriptional activity. Also acts as a coactivator for HNF1B-dependent transcription. The polypeptide is Pterin-4-alpha-carbinolamine dehydratase (Pcbd1) (Mus musculus (Mouse)).